The chain runs to 319 residues: ATP-dependent 6-phosphofructokinase (319 aa).

Residue Gly11 participates in ATP binding. 21 to 25 lines the ADP pocket; sequence RAVVR. ATP is bound by residues 72–73 and 102–105; these read RC and GEGS. Glu103 lines the Mg(2+) pocket. Substrate is bound at residue 126 to 128; that stretch reads TID. Residue Asp128 is the Proton acceptor of the active site. Lys155 contributes to the ADP binding site. Substrate-binding positions include Arg163 and 170–172; that span reads MGR. Residues 186–188, Arg212, and 214–216 each bind ADP; these read GAE and KIN. Residues Glu223, Arg244, and 250 to 253 contribute to the substrate site; that span reads HVQR.

It belongs to the phosphofructokinase type A (PFKA) family. ATP-dependent PFK group I subfamily. Prokaryotic clade 'B1' sub-subfamily. Homotetramer. Mg(2+) serves as cofactor.

It localises to the cytoplasm. It catalyses the reaction beta-D-fructose 6-phosphate + ATP = beta-D-fructose 1,6-bisphosphate + ADP + H(+). It participates in carbohydrate degradation; glycolysis; D-glyceraldehyde 3-phosphate and glycerone phosphate from D-glucose: step 3/4. With respect to regulation, allosterically activated by ADP and other diphosphonucleosides, and allosterically inhibited by phosphoenolpyruvate. Its function is as follows. Catalyzes the phosphorylation of D-fructose 6-phosphate to fructose 1,6-bisphosphate by ATP, the first committing step of glycolysis. The chain is ATP-dependent 6-phosphofructokinase from Thermotoga neapolitana (strain ATCC 49049 / DSM 4359 / NBRC 107923 / NS-E).